A 480-amino-acid chain; its full sequence is tRNA (guanine(37)-N(1))-methyltransferase (480 aa).

The N-terminal 18 residues, 1–18 (MAAVWRRSARLFILLQRH), are a transit peptide targeting the mitochondrion. S-adenosyl-L-methionine contacts are provided by residues H273, 311 to 312 (DL), 339 to 340 (DG), and N367. Positions 458–480 (HTQDRDTSEEPCPKKQKCEDSTN) are disordered.

This sequence belongs to the class I-like SAM-binding methyltransferase superfamily. TRM5/TYW2 family. As to quaternary structure, monomer.

The protein localises to the mitochondrion matrix. Its subcellular location is the nucleus. It localises to the cytoplasm. The enzyme catalyses guanosine(37) in tRNA + S-adenosyl-L-methionine = N(1)-methylguanosine(37) in tRNA + S-adenosyl-L-homocysteine + H(+). Involved in mitochondrial tRNA methylation. Specifically methylates the N1 position of guanosine-37 in various tRNAs. Methylation is not dependent on the nature of the nucleoside 5' of the target nucleoside. This is the first step in the biosynthesis of wybutosine (yW), a modified base adjacent to the anticodon of tRNAs and required for accurate decoding. This Danio rerio (Zebrafish) protein is tRNA (guanine(37)-N(1))-methyltransferase (trmt5).